Here is a 210-residue protein sequence, read N- to C-terminus: Proteasome subunit beta (210 aa).

Positions methionine 1 to glycine 9 are cleaved as a propeptide — removed in mature form; by autocatalysis. Residue threonine 10 is the Nucleophile of the active site.

It belongs to the peptidase T1B family. In terms of assembly, the 20S proteasome core is composed of 14 alpha and 14 beta subunits that assemble into four stacked heptameric rings, resulting in a barrel-shaped structure. The two inner rings, each composed of seven catalytic beta subunits, are sandwiched by two outer rings, each composed of seven alpha subunits. The catalytic chamber with the active sites is on the inside of the barrel. Has a gated structure, the ends of the cylinder being occluded by the N-termini of the alpha-subunits. Is capped at one or both ends by the proteasome regulatory ATPase, PAN.

It is found in the cytoplasm. It catalyses the reaction Cleavage of peptide bonds with very broad specificity.. Its activity is regulated as follows. The formation of the proteasomal ATPase PAN-20S proteasome complex, via the docking of the C-termini of PAN into the intersubunit pockets in the alpha-rings, triggers opening of the gate for substrate entry. Interconversion between the open-gate and close-gate conformations leads to a dynamic regulation of the 20S proteasome proteolysis activity. In terms of biological role, component of the proteasome core, a large protease complex with broad specificity involved in protein degradation. This Methanococcoides burtonii (strain DSM 6242 / NBRC 107633 / OCM 468 / ACE-M) protein is Proteasome subunit beta.